A 26-amino-acid chain; its full sequence is Toxin TdII-1 (26 aa).

It belongs to the long (4 C-C) scorpion toxin superfamily. Sodium channel inhibitor family. Beta subfamily. As to expression, expressed by the venom gland.

It localises to the secreted. Its function is as follows. Beta toxins bind voltage-independently at site-4 of sodium channels (Nav) and shift the voltage of activation toward more negative potentials thereby affecting sodium channel activation and promoting spontaneous and repetitive firing. This toxin is active against mammals and crustaceans. In Tityus discrepans (Venezuelan scorpion), this protein is Toxin TdII-1.